Consider the following 165-residue polypeptide: Ubiquitin-fold modifier-conjugating enzyme 1 (165 aa).

Cys-116 acts as the Glycyl thioester intermediate in catalysis.

This sequence belongs to the ubiquitin-conjugating enzyme family. UFC1 subfamily.

In terms of biological role, E2-like enzyme which forms an intermediate with UFM1 via a thioester linkage. The sequence is that of Ubiquitin-fold modifier-conjugating enzyme 1 from Drosophila virilis (Fruit fly).